The primary structure comprises 280 residues: Vitamin B12-binding protein (280 aa).

The first 27 residues, methionine 1–alanine 27, serve as a signal peptide directing secretion. A Fe/B12 periplasmic-binding domain is found at arginine 30–alanine 277. Tyrosine 57 serves as a coordination point for cyanocob(III)alamin. Residues cysteine 190 and cysteine 266 are joined by a disulfide bond.

It belongs to the BtuF family. As to quaternary structure, the complex is composed of two ATP-binding proteins (BtuD), two transmembrane proteins (BtuC) and a solute-binding protein (BtuF).

It localises to the periplasm. In terms of biological role, part of the ABC transporter complex BtuCDF involved in vitamin B12 import. Binds vitamin B12 and delivers it to the periplasmic surface of BtuC. This is Vitamin B12-binding protein from Yersinia pestis bv. Antiqua (strain Antiqua).